We begin with the raw amino-acid sequence, 416 residues long: Phosphoglycerate kinase (416 aa).

The (2R)-3-phosphoglycerate site is built by Val23, Asp24, Phe25, Asn26, Gln38, Arg39, Ser62, His63, Gly65, Arg66, Leu121, Arg122, His168, and Arg169. Gly212 is a binding site for ADP. Gly212 contacts CDP. Residues Ala213 and Lys214 each contribute to the AMP site. Ala213 lines the ATP pocket. Ala213 contributes to the Mg(2+) binding site. Residues Ala216 and Asp217 each coordinate Mg(2+). A CDP-binding site is contributed by Asp217. Lys218 is a binding site for AMP. Residue Lys218 coordinates ATP. Gly236 provides a ligand contact to ADP. Gly236 provides a ligand contact to CDP. The AMP site is built by Gly237 and Gly311. ATP-binding residues include Gly237 and Gly311. 2 residues coordinate CDP: Gly336 and Phe341. Phe341 contacts ADP. Glu342 is an AMP binding site. The ATP site is built by Glu342, Asp373, and Thr374. Asp373 is a binding site for Mg(2+).

Belongs to the phosphoglycerate kinase family. In terms of assembly, monomer. The cofactor is Mg(2+).

It is found in the cytoplasm. The protein resides in the mitochondrion. It catalyses the reaction (2R)-3-phosphoglycerate + ATP = (2R)-3-phospho-glyceroyl phosphate + ADP. Its pathway is carbohydrate degradation; glycolysis; pyruvate from D-glyceraldehyde 3-phosphate: step 2/5. Functionally, catalyzes one of the two ATP producing reactions in the glycolytic pathway via the reversible conversion of 1,3-diphosphoglycerate to 3-phosphoglycerate. Both L- and D- forms of purine and pyrimidine nucleotides can be used as substrates, but the activity is much lower on pyrimidines. Negatively regulates the biosynthesis of acetyl-CoA from pyruvate in the mitochondrion. The protein is Phosphoglycerate kinase (PGK1) of Eremothecium gossypii (strain ATCC 10895 / CBS 109.51 / FGSC 9923 / NRRL Y-1056) (Yeast).